Consider the following 153-residue polypeptide: Protein-export protein SecB (153 aa).

This sequence belongs to the SecB family. Homotetramer, a dimer of dimers. One homotetramer interacts with 1 SecA dimer.

It is found in the cytoplasm. One of the proteins required for the normal export of preproteins out of the cell cytoplasm. It is a molecular chaperone that binds to a subset of precursor proteins, maintaining them in a translocation-competent state. It also specifically binds to its receptor SecA. The chain is Protein-export protein SecB from Erwinia tasmaniensis (strain DSM 17950 / CFBP 7177 / CIP 109463 / NCPPB 4357 / Et1/99).